Here is a 470-residue protein sequence, read N- to C-terminus: Acetyl-CoA decarbonylase/synthase complex subunit beta 2 (470 aa).

[Ni-Fe-S] cluster-binding residues include C189, C192, C278, and C280.

The protein belongs to the CdhC family. In terms of assembly, monomer. The ACDS complex is made up of alpha, epsilon, beta, gamma and delta chains with a probable stoichiometry of (alpha(2)epsilon(2))(4)-beta(8)-(gamma(1)delta(1))(8) (Potential). Requires [Ni-Fe-S] cluster as cofactor.

It catalyses the reaction Co(I)-[corrinoid Fe-S protein] + acetyl-CoA + H(+) = methyl-Co(III)-[corrinoid Fe-S protein] + CO + CoA. The protein operates within one-carbon metabolism; methanogenesis from acetate. Part of a complex that catalyzes the reversible cleavage of acetyl-CoA, allowing growth on acetate as sole source of carbon and energy. The alpha-epsilon complex generates CO from CO(2), while the beta subunit (this protein) combines the CO with CoA and a methyl group to form acetyl-CoA. The methyl group, which is incorporated into acetyl-CoA, is transferred to the beta subunit by a corrinoid iron-sulfur protein (the gamma-delta complex). The protein is Acetyl-CoA decarbonylase/synthase complex subunit beta 2 (cdhC2) of Methanosarcina acetivorans (strain ATCC 35395 / DSM 2834 / JCM 12185 / C2A).